Here is a 357-residue protein sequence, read N- to C-terminus: Nicotinate-nucleotide--dimethylbenzimidazole phosphoribosyltransferase (357 aa).

Catalysis depends on glutamate 323, which acts as the Proton acceptor.

The protein belongs to the CobT family.

The enzyme catalyses 5,6-dimethylbenzimidazole + nicotinate beta-D-ribonucleotide = alpha-ribazole 5'-phosphate + nicotinate + H(+). The protein operates within nucleoside biosynthesis; alpha-ribazole biosynthesis; alpha-ribazole from 5,6-dimethylbenzimidazole: step 1/2. In terms of biological role, catalyzes the synthesis of alpha-ribazole-5'-phosphate from nicotinate mononucleotide (NAMN) and 5,6-dimethylbenzimidazole (DMB). The chain is Nicotinate-nucleotide--dimethylbenzimidazole phosphoribosyltransferase from Nitratidesulfovibrio vulgaris (strain ATCC 29579 / DSM 644 / CCUG 34227 / NCIMB 8303 / VKM B-1760 / Hildenborough) (Desulfovibrio vulgaris).